Consider the following 939-residue polypeptide: Translation initiation factor IF-2 (939 aa).

Positions 57–274 (RLKPAAPAAP…APTKKNEQKI (218 aa)) are disordered. Basic and acidic residues-rich tracts occupy residues 83 to 122 (MEPK…KESV) and 129 to 138 (LEQEPPKEEL). Polar residues-rich tracts occupy residues 146–158 (ESAS…SNPL) and 170–180 (VATTLATQTDA). Over residues 208 to 227 (KRSEEPAPKADRPSLEEART) the composition is skewed to basic and acidic residues. The span at 252–262 (ARKKKKEKKKP) shows a compositional bias: basic residues. Residues 438 to 607 (ERPPVVTIMG…LVQSELLELK (170 aa)) enclose the tr-type G domain. The segment at 447–454 (GHVDHGKT) is G1. GTP is bound at residue 447–454 (GHVDHGKT). A G2 region spans residues 472–476 (GITQH). Residues 493 to 496 (DTPG) form a G3 region. GTP is bound by residues 493 to 497 (DTPGH) and 547 to 550 (NKVD). A G4 region spans residues 547–550 (NKVD). Positions 583–585 (SAK) are G5.

This sequence belongs to the TRAFAC class translation factor GTPase superfamily. Classic translation factor GTPase family. IF-2 subfamily.

It is found in the cytoplasm. Its function is as follows. One of the essential components for the initiation of protein synthesis. Protects formylmethionyl-tRNA from spontaneous hydrolysis and promotes its binding to the 30S ribosomal subunits. Also involved in the hydrolysis of GTP during the formation of the 70S ribosomal complex. The protein is Translation initiation factor IF-2 of Wolinella succinogenes (strain ATCC 29543 / DSM 1740 / CCUG 13145 / JCM 31913 / LMG 7466 / NCTC 11488 / FDC 602W) (Vibrio succinogenes).